Consider the following 283-residue polypeptide: MNKKRLLFRTPLDALFLLFGTALSACSSTATNVISSLSSAQKYFDAHKSELIKKNVINLLKEGYSTDSKATVNSLFAGWKYTLMDQKILERNLDASRFTKAFGTNKGKDDVIPSISEKGLFLDETYSGVSQQIAKVLGVQSQKVTGFSYSWSSTTNFKVVISFMMQGIVGSGEESNSLIKSFLSSGNNGNVTENDFNNGNANFDGTFIFTFTPPTDGRRFAFSNFDPITGTINFPANLQIDASTTHEKLNILMQNNEHVKKIKSRSFTGKSFDLLPFYFYALL.

The N-terminal stretch at 1 to 25 (MNKKRLLFRTPLDALFLLFGTALSA) is a signal peptide. A lipid anchor (N-palmitoyl cysteine) is attached at Cys-26. Residue Cys-26 is the site of S-diacylglycerol cysteine attachment.

Belongs to the MG439/MG440 family.

The protein localises to the cell membrane. This is an uncharacterized protein from Mycoplasma pneumoniae (strain ATCC 29342 / M129 / Subtype 1) (Mycoplasmoides pneumoniae).